Consider the following 396-residue polypeptide: Serine/threonine-protein kinase VRK1 (396 aa).

The Protein kinase domain occupies 37–317; that stretch reads WKLGSPIGQG…LLDYVEKPLY (281 aa). Residues 43–51 and Lys-71 contribute to the ATP site; that span reads IGQGGFGCI. Residue Lys-71 forms a Glycyl lysine isopeptide (Lys-Gly) (interchain with G-Cter in SUMO2) linkage. The active-site Proton acceptor is Asp-177. Positions 352–396 are disordered; that stretch reads KPVAKKRKKEAEESVESSVEDMECSDKQTEEATQTRSKTRKRVQK. A compositionally biased stretch (acidic residues) spans 364 to 374; the sequence is ESVESSVEDME. Ser-376 bears the Phosphoserine mark. A required for interaction with the nucleosome region spans residues 387–393; that stretch reads RSKTRKR.

Belongs to the protein kinase superfamily. CK1 Ser/Thr protein kinase family. VRK subfamily. As to quaternary structure, interacts with HDAC1, KAT2B, SETDB1, KDM3A and KDM4A. Associates with the nucleosome through interactions with nucleosome DNA, histone H2A and histone H2B; the interaction with H2A and H2B is mediated by the nucleosome acidic patch, a cluster of negatively charged residues of H2A and H2B forming a cleft within the nucleosome core. In terms of processing, autophosphorylated at various serine and threonine residues. Autophosphorylation does not impair its ability to phosphorylate p53/TP53. Phosphorylation by PLK3 leads to induction of Golgi fragmentation during mitosis.

Its subcellular location is the nucleus. The protein localises to the cytoplasm. The protein resides in the cajal body. It carries out the reaction L-seryl-[protein] + ATP = O-phospho-L-seryl-[protein] + ADP + H(+). The enzyme catalyses L-threonyl-[protein] + ATP = O-phospho-L-threonyl-[protein] + ADP + H(+). Active in presence of Mn(2+), Mg(2+) and Zn(2+), but is not functional with Ca(2+) or Cu(2+). Has a higher affinity for Mn(2+) than for Mg(2+). RAN inhibits its autophosphorylation and its ability to phosphorylate histone H3. Serine/threonine kinase involved in the regulation of key cellular processes including the cell cycle, nuclear condensation, transcription regulation, and DNA damage response. Controls chromatin organization and remodeling by mediating phosphorylation of histone H3 on 'Thr-4' and histone H2AX (H2aXT4ph). It also phosphorylates KAT5 in response to DNA damage, promoting KAT5 association with chromatin and histone acetyltransferase activity. Is involved in the regulation of cell cycle progression of neural progenitors, and is required for proper cortical neuronal migration. Is involved in neurite elongation and branching in motor neurons, and has an essential role in Cajal bodies assembly, acting through COIL phosphorylation and the control of coilin degradation. Involved in Golgi disassembly during the cell cycle: following phosphorylation by PLK3 during mitosis, it is required to induce Golgi fragmentation. Phosphorylates BANF1: disrupts its ability to bind DNA, reduces its binding to LEM domain-containing proteins and causes its relocalization from the nucleus to the cytoplasm. Phosphorylates TP53BP1 and p53/TP53 on 'Thr-18', preventing the interaction between p53/TP53 and MDM2. Phosphorylates ATF2 which activates its transcriptional activity. Phosphorylates JUN. This is Serine/threonine-protein kinase VRK1 (VRK1) from Bos taurus (Bovine).